A 148-amino-acid chain; its full sequence is uncharacterized protein (148 aa).

An ABC transmembrane type-1 domain is found at 25-148 (LSIGLIFSLI…YSITNIFIYN (124 aa)). 3 helical membrane passes run 26–46 (SIGL…PLII), 60–80 (IVII…STYI), and 127–147 (ITRV…IFIY).

It is found in the cell membrane. This is an uncharacterized protein from Staphylococcus epidermidis.